Reading from the N-terminus, the 317-residue chain is Ribosomal protein L11 methyltransferase (317 aa).

Threonine 158, glycine 179, aspartate 201, and asparagine 244 together coordinate S-adenosyl-L-methionine.

The protein belongs to the methyltransferase superfamily. PrmA family.

It localises to the cytoplasm. The enzyme catalyses L-lysyl-[protein] + 3 S-adenosyl-L-methionine = N(6),N(6),N(6)-trimethyl-L-lysyl-[protein] + 3 S-adenosyl-L-homocysteine + 3 H(+). Functionally, methylates ribosomal protein L11. This Lactococcus lactis subsp. lactis (strain IL1403) (Streptococcus lactis) protein is Ribosomal protein L11 methyltransferase.